Reading from the N-terminus, the 292-residue chain is MSNANFNRGPAYGLSAEVKNKLAQKYDPQTERQLRVWIEGATGRRIGDNFMDGLKDGVILCELINKLQPGSVQKVNDPVQNWHKLENIGNFLRAIKHYGVKPHDIFEANDLFENTNHTQVQSTLIALASQAKTKGNNVGLGVKYAEKQQRRFQPEKLREGRNIIGLQMGTNKFASQQGMTAYGTRRHLYDPKLGTDQPLDQATISLQMGTNKGASQAGMTAPGTKRQIFEPSLGMERCDTNIIGLQMGSNKGASQQGMTVYGLPRQVYDPKYCDAPGLLGEDGLNHSFYNSQ.

Residues 28 to 131 (PQTERQLRVW…STLIALASQA (104 aa)) form the Calponin-homology (CH) domain. Calponin-like repeat units follow at residues 164–189 (IGLQ…RHLY), 204–229 (ISLQ…RQIF), and 243–268 (IGLQ…RQVY). At T170 the chain carries Phosphothreonine; by ROCK2. Phosphoserine; by PKC, CaMK2 and ROCK2 is present on S175. Residues T180 and T184 each carry the phosphothreonine; by ROCK2 modification. At T184 the chain carries Phosphothreonine; by PKC and CaMK2. A calmodulin-binding region spans residues 185 to 193 (RRHLYDPKL). At T259 the chain carries Phosphothreonine; by ROCK2.

Belongs to the calponin family. In terms of processing, phosphorylation by PKC or CaM kinase II reduces the binding of calponin to F-actin and tropomyosin. Smooth muscle, and tissues containing significant amounts of smooth muscle.

Thin filament-associated protein that is implicated in the regulation and modulation of smooth muscle contraction. It is capable of binding to actin, calmodulin and tropomyosin. The interaction of calponin with actin inhibits the actomyosin Mg-ATPase activity. The protein is Calponin-1 (CNN1) of Gallus gallus (Chicken).